The primary structure comprises 159 residues: Immunoglobulin J chain (159 aa).

The signal sequence occupies residues 1-21 (MKTHLLLWGVLAIFVKAVLVT). 3 disulfides stabilise this stretch: C34–C123, C93–C113, and C131–C156. N70 carries N-linked (GlcNAc...) (complex) asparagine glycosylation.

As to quaternary structure, part of the secretory IgA (sIgA) complex that consists of two, four or five IgA monomers, and two additional non-Ig polypeptides, namely the JCHAIN and the secretory component (the proteolytic product of PIGR). Part of the secretory IgM (sIgM) complex that consist of five IgM monomers, and two additional non-Ig polypeptides, namely the JCHAIN and the secretory component (the proteolytic product of PIGR). JCHAIN-containing IgM interacts (via CH4 domain) with FCRM (via Ig-like domain).

It localises to the secreted. Its function is as follows. Serves to link two monomer units of either IgM or IgA. In the case of IgM, the J chain-joined dimer is a nucleating unit for the IgM pentamer, and in the case of IgA it induces dimers and/or larger polymers. It also helps to bind these immunoglobulins to secretory component. The polypeptide is Immunoglobulin J chain (Mus musculus (Mouse)).